Here is a 295-residue protein sequence, read N- to C-terminus: ATP synthase gamma chain (295 aa).

It belongs to the ATPase gamma chain family. In terms of assembly, F-type ATPases have 2 components, CF(1) - the catalytic core - and CF(0) - the membrane proton channel. CF(1) has five subunits: alpha(3), beta(3), gamma(1), delta(1), epsilon(1). CF(0) has three main subunits: a, b and c.

Its subcellular location is the cell inner membrane. Functionally, produces ATP from ADP in the presence of a proton gradient across the membrane. The gamma chain is believed to be important in regulating ATPase activity and the flow of protons through the CF(0) complex. This Campylobacter fetus subsp. fetus (strain 82-40) protein is ATP synthase gamma chain.